We begin with the raw amino-acid sequence, 289 residues long: ATP synthase gamma chain (289 aa).

Belongs to the ATPase gamma chain family. F-type ATPases have 2 components, CF(1) - the catalytic core - and CF(0) - the membrane proton channel. CF(1) has five subunits: alpha(3), beta(3), gamma(1), delta(1), epsilon(1). CF(0) has three main subunits: a, b and c.

The protein resides in the cell inner membrane. Its function is as follows. Produces ATP from ADP in the presence of a proton gradient across the membrane. The gamma chain is believed to be important in regulating ATPase activity and the flow of protons through the CF(0) complex. This Coxiella burnetii (strain CbuK_Q154) (Coxiella burnetii (strain Q154)) protein is ATP synthase gamma chain.